The chain runs to 240 residues: Regulatory protein SdiA (240 aa).

An HTH luxR-type domain is found at 173–238 (VMTPEMNFSK…QVACYAAATG (66 aa)). The segment at residues 197 to 216 (SAEIAMILSISENTVNFHQK) is a DNA-binding region (H-T-H motif).

Activates cell division by specifically increasing transcription from one of the two promoters that lie immediately upstream of the ftsQAZ gene cluster. Activates ydiV expression in response to extracellular autoinducer AI-1 (Vibrio fischeri autoinducer oxoC6). The chain is Regulatory protein SdiA (sdiA) from Escherichia coli (strain K12).